Here is a 267-residue protein sequence, read N- to C-terminus: UPF0246 protein Dshi_3333 (267 aa).

The protein belongs to the UPF0246 family.

The chain is UPF0246 protein Dshi_3333 from Dinoroseobacter shibae (strain DSM 16493 / NCIMB 14021 / DFL 12).